An 87-amino-acid chain; its full sequence is UPF0250 protein SG0794 (87 aa).

It belongs to the UPF0250 family.

This Sodalis glossinidius (strain morsitans) protein is UPF0250 protein SG0794.